The primary structure comprises 142 residues: DNA-directed RNA polymerase II subunit RPB4 (142 aa).

The protein belongs to the eukaryotic RPB4 RNA polymerase subunit family. In terms of assembly, component of the RNA polymerase II (Pol II) core complex consisting of 12 subunits: a ten-subunit catalytic core composed of POLR2A/RPB1, POLR2B/RPB2, POLR2C/RPB3, POLR2I/RPB9, POLR2J/RPB11, POLR2E/RPABC1, POLR2F/RPABC2, POLR2H/RPABC3, POLR2K/RPABC4 and POLR2L/RPABC5 and a mobile stalk composed of two subunits POLR2D/RPB4 and POLR2G/RPB7, protruding from the core and functioning primarily in transcription initiation. Part of Pol II(G) complex, in which Pol II core associates with an additional subunit POLR2M; unlike conventional Pol II, Pol II(G) functions as a transcriptional repressor. Part of TBP-based Pol II pre-initiation complex (PIC), in which Pol II core assembles with general transcription factors and other specific initiation factors including GTF2E1, GTF2E2, GTF2F1, GTF2F2, TCEA1, ERCC2, ERCC3, GTF2H2, GTF2H3, GTF2H4, GTF2H5, GTF2A1, GTF2A2, GTF2B and TBP; this large multi-subunit PIC complex mediates DNA unwinding and targets Pol II core to the transcription start site where the first phosphodiester bond forms.

It localises to the nucleus. Core component of RNA polymerase II (Pol II), a DNA-dependent RNA polymerase which synthesizes mRNA precursors and many functional non-coding RNAs using the four ribonucleoside triphosphates as substrates. Pol II is the central component of the basal RNA polymerase II transcription machinery. It is composed of mobile elements that move relative to each other. POLR2D/RPB4 is part of a subcomplex with POLR2G/RPB7 that binds to a pocket formed by POLR2A/RPB1, POLR2B/RPB2 and POLR2F/RPABC2 at the base of the clamp element. The POLR2D/RPB4-POLR2G/RPB7 subcomplex seems to lock the clamp via POLR2G/RPB7 in the closed conformation thus preventing double-stranded DNA to enter the active site cleft. The POLR2D/RPB4-POLR2G/RPB7 subcomplex binds single-stranded DNA and RNA. The sequence is that of DNA-directed RNA polymerase II subunit RPB4 (POLR2D) from Homo sapiens (Human).